Reading from the N-terminus, the 387-residue chain is Succinate--CoA ligase [ADP-forming] subunit beta (387 aa).

Residues 9–236 (KELFAKHNVP…RAATDPLELK (228 aa)) enclose the ATP-grasp domain. ATP contacts are provided by residues Lys45, 52–54 (GRG), Ser94, and Glu99. Asn191 and Asp205 together coordinate Mg(2+). Residues Asn256 and 318-320 (GIT) contribute to the substrate site.

It belongs to the succinate/malate CoA ligase beta subunit family. Heterotetramer of two alpha and two beta subunits. Requires Mg(2+) as cofactor.

It catalyses the reaction succinate + ATP + CoA = succinyl-CoA + ADP + phosphate. The catalysed reaction is GTP + succinate + CoA = succinyl-CoA + GDP + phosphate. It participates in carbohydrate metabolism; tricarboxylic acid cycle; succinate from succinyl-CoA (ligase route): step 1/1. In terms of biological role, succinyl-CoA synthetase functions in the citric acid cycle (TCA), coupling the hydrolysis of succinyl-CoA to the synthesis of either ATP or GTP and thus represents the only step of substrate-level phosphorylation in the TCA. The beta subunit provides nucleotide specificity of the enzyme and binds the substrate succinate, while the binding sites for coenzyme A and phosphate are found in the alpha subunit. This Mycobacterium marinum (strain ATCC BAA-535 / M) protein is Succinate--CoA ligase [ADP-forming] subunit beta.